We begin with the raw amino-acid sequence, 380 residues long: Lipid-A-disaccharide synthase (380 aa).

Belongs to the LpxB family.

The enzyme catalyses a lipid X + a UDP-2-N,3-O-bis[(3R)-3-hydroxyacyl]-alpha-D-glucosamine = a lipid A disaccharide + UDP + H(+). The protein operates within bacterial outer membrane biogenesis; LPS lipid A biosynthesis. Condensation of UDP-2,3-diacylglucosamine and 2,3-diacylglucosamine-1-phosphate to form lipid A disaccharide, a precursor of lipid A, a phosphorylated glycolipid that anchors the lipopolysaccharide to the outer membrane of the cell. The sequence is that of Lipid-A-disaccharide synthase from Francisella tularensis subsp. novicida (strain U112).